An 88-amino-acid polypeptide reads, in one-letter code: Small ribosomal subunit protein uS15 (88 aa).

The protein belongs to the universal ribosomal protein uS15 family. As to quaternary structure, part of the 30S ribosomal subunit. Forms a bridge to the 50S subunit in the 70S ribosome, contacting the 23S rRNA.

One of the primary rRNA binding proteins, it binds directly to 16S rRNA where it helps nucleate assembly of the platform of the 30S subunit by binding and bridging several RNA helices of the 16S rRNA. Functionally, forms an intersubunit bridge (bridge B4) with the 23S rRNA of the 50S subunit in the ribosome. This Flavobacterium johnsoniae (strain ATCC 17061 / DSM 2064 / JCM 8514 / BCRC 14874 / CCUG 350202 / NBRC 14942 / NCIMB 11054 / UW101) (Cytophaga johnsonae) protein is Small ribosomal subunit protein uS15.